The following is a 119-amino-acid chain: Autophagy-related protein 8B (119 aa).

Glycine 117 is lipidated: Phosphatidylethanolamine amidated glycine. A propeptide spans 118–119 (LL) (removed in mature form).

Belongs to the ATG8 family. In terms of assembly, interacts with ATG4. In terms of processing, the C-terminal 2 residues are removed by ATG4 to expose Gly-117 at the C-terminus. The C-terminal Gly is then amidated with phosphatidylethanolamine by an activating system similar to that for ubiquitin.

It is found in the cytoplasmic vesicle. The protein resides in the autophagosome membrane. The protein localises to the vacuole membrane. Its subcellular location is the cytoplasm. It localises to the cytoskeleton. Functionally, ubiquitin-like modifier involved in autophagosomes formation. May mediate the delivery of the autophagosomes to the vacuole via the microtubule cytoskeleton. The sequence is that of Autophagy-related protein 8B (ATG8B) from Oryza sativa subsp. indica (Rice).